The sequence spans 363 residues: 3-isopropylmalate dehydrogenase (363 aa).

78–91 (GPKWENLPPESQPE) contributes to the NAD(+) binding site. Residues Arg-99, Arg-109, Arg-138, and Asp-227 each contribute to the substrate site. The Mg(2+) site is built by Asp-227, Asp-251, and Asp-255. An NAD(+)-binding site is contributed by 285–297 (GSAPDIAGKNIAN).

The protein belongs to the isocitrate and isopropylmalate dehydrogenases family. LeuB type 1 subfamily. As to quaternary structure, homodimer. Mg(2+) serves as cofactor. Requires Mn(2+) as cofactor.

The protein resides in the cytoplasm. It carries out the reaction (2R,3S)-3-isopropylmalate + NAD(+) = 4-methyl-2-oxopentanoate + CO2 + NADH. Its pathway is amino-acid biosynthesis; L-leucine biosynthesis; L-leucine from 3-methyl-2-oxobutanoate: step 3/4. Its function is as follows. Catalyzes the oxidation of 3-carboxy-2-hydroxy-4-methylpentanoate (3-isopropylmalate) to 3-carboxy-4-methyl-2-oxopentanoate. The product decarboxylates to 4-methyl-2 oxopentanoate. The protein is 3-isopropylmalate dehydrogenase of Salmonella choleraesuis (strain SC-B67).